Consider the following 100-residue polypeptide: Aspartyl/glutamyl-tRNA(Asn/Gln) amidotransferase subunit C (100 aa).

It belongs to the GatC family. In terms of assembly, heterotrimer of A, B and C subunits.

The enzyme catalyses L-glutamyl-tRNA(Gln) + L-glutamine + ATP + H2O = L-glutaminyl-tRNA(Gln) + L-glutamate + ADP + phosphate + H(+). It catalyses the reaction L-aspartyl-tRNA(Asn) + L-glutamine + ATP + H2O = L-asparaginyl-tRNA(Asn) + L-glutamate + ADP + phosphate + 2 H(+). In terms of biological role, allows the formation of correctly charged Asn-tRNA(Asn) or Gln-tRNA(Gln) through the transamidation of misacylated Asp-tRNA(Asn) or Glu-tRNA(Gln) in organisms which lack either or both of asparaginyl-tRNA or glutaminyl-tRNA synthetases. The reaction takes place in the presence of glutamine and ATP through an activated phospho-Asp-tRNA(Asn) or phospho-Glu-tRNA(Gln). This chain is Aspartyl/glutamyl-tRNA(Asn/Gln) amidotransferase subunit C, found in Rickettsia africae (strain ESF-5).